The chain runs to 493 residues: Ketol-acid reductoisomerase (NADP(+)) (493 aa).

The KARI N-terminal Rossmann domain maps to 15 to 208; the sequence is AQLGKCRFMQ…GGDRAGVLES (194 aa). Residues 45-48, R68, R76, S78, and 108-110 contribute to the NADP(+) site; these read CGAQ and DKQ. Residue H132 is part of the active site. G158 lines the NADP(+) pocket. KARI C-terminal knotted domains follow at residues 209 to 344 and 345 to 486; these read SFVA…NALA and FAGK…MKDM. The Mg(2+) site is built by D217, E221, E389, and E393. S414 contacts substrate.

This sequence belongs to the ketol-acid reductoisomerase family. Requires Mg(2+) as cofactor.

It carries out the reaction (2R)-2,3-dihydroxy-3-methylbutanoate + NADP(+) = (2S)-2-acetolactate + NADPH + H(+). The catalysed reaction is (2R,3R)-2,3-dihydroxy-3-methylpentanoate + NADP(+) = (S)-2-ethyl-2-hydroxy-3-oxobutanoate + NADPH + H(+). Its pathway is amino-acid biosynthesis; L-isoleucine biosynthesis; L-isoleucine from 2-oxobutanoate: step 2/4. It participates in amino-acid biosynthesis; L-valine biosynthesis; L-valine from pyruvate: step 2/4. Its function is as follows. Involved in the biosynthesis of branched-chain amino acids (BCAA). Catalyzes an alkyl-migration followed by a ketol-acid reduction of (S)-2-acetolactate (S2AL) to yield (R)-2,3-dihydroxy-isovalerate. In the isomerase reaction, S2AL is rearranged via a Mg-dependent methyl migration to produce 3-hydroxy-3-methyl-2-ketobutyrate (HMKB). In the reductase reaction, this 2-ketoacid undergoes a metal-dependent reduction by NADPH to yield (R)-2,3-dihydroxy-isovalerate. The chain is Ketol-acid reductoisomerase (NADP(+)) from Aeromonas salmonicida (strain A449).